The chain runs to 295 residues: Probable ketoamine kinase slr1563 (295 aa).

99 to 101 (EWL) is a binding site for ATP. The Proton acceptor role is filled by aspartate 201.

The protein belongs to the fructosamine kinase family.

Functionally, ketoamine kinase that phosphorylates ketoamines on the third carbon of the sugar moiety to generate ketoamine 3-phosphate. This is Probable ketoamine kinase slr1563 from Synechocystis sp. (strain ATCC 27184 / PCC 6803 / Kazusa).